Consider the following 282-residue polypeptide: Tryptophan 2,3-dioxygenase (282 aa).

Substrate is bound by residues 51-55 (FIIQH), Tyr113, and Arg117. Residue His240 coordinates heme. Thr254 is a substrate binding site.

Belongs to the tryptophan 2,3-dioxygenase family. In terms of assembly, homotetramer. Requires heme as cofactor.

The enzyme catalyses L-tryptophan + O2 = N-formyl-L-kynurenine. The protein operates within amino-acid degradation; L-tryptophan degradation via kynurenine pathway; L-kynurenine from L-tryptophan: step 1/2. Its function is as follows. Heme-dependent dioxygenase that catalyzes the oxidative cleavage of the L-tryptophan (L-Trp) pyrrole ring and converts L-tryptophan to N-formyl-L-kynurenine. Catalyzes the oxidative cleavage of the indole moiety. The sequence is that of Tryptophan 2,3-dioxygenase from Polaromonas naphthalenivorans (strain CJ2).